The sequence spans 241 residues: ATP synthase subunit a (241 aa).

The next 5 helical transmembrane spans lie at 21-41 (LASILMVIITSLIVLVIAIAC), 84-104 (VTLILFIFVGNMLGLPFAIVI), 116-136 (DATVTLTLATMVILLTHYYGI), 183-203 (ILIGLLSSLIIGHAAWGWIIG), and 207-227 (LIAWQAFSIFIGTIQAYIFIM).

It belongs to the ATPase A chain family. As to quaternary structure, F-type ATPases have 2 components, CF(1) - the catalytic core - and CF(0) - the membrane proton channel. CF(1) has five subunits: alpha(3), beta(3), gamma(1), delta(1), epsilon(1). CF(0) has three main subunits: a(1), b(2) and c(9-12). The alpha and beta chains form an alternating ring which encloses part of the gamma chain. CF(1) is attached to CF(0) by a central stalk formed by the gamma and epsilon chains, while a peripheral stalk is formed by the delta and b chains.

The protein resides in the cell membrane. In terms of biological role, key component of the proton channel; it plays a direct role in the translocation of protons across the membrane. The chain is ATP synthase subunit a from Staphylococcus carnosus (strain TM300).